Consider the following 321-residue polypeptide: tRNA(Ile)-lysidine synthase (321 aa).

ATP is bound at residue 21-26 (SYGSDS).

Belongs to the tRNA(Ile)-lysidine synthase family.

It is found in the cytoplasm. It carries out the reaction cytidine(34) in tRNA(Ile2) + L-lysine + ATP = lysidine(34) in tRNA(Ile2) + AMP + diphosphate + H(+). In terms of biological role, ligates lysine onto the cytidine present at position 34 of the AUA codon-specific tRNA(Ile) that contains the anticodon CAU, in an ATP-dependent manner. Cytidine is converted to lysidine, thus changing the amino acid specificity of the tRNA from methionine to isoleucine. This Campylobacter jejuni subsp. jejuni serotype O:2 (strain ATCC 700819 / NCTC 11168) protein is tRNA(Ile)-lysidine synthase.